A 31-amino-acid chain; its full sequence is Cyclotide mra3 (31 aa).

3 disulfide bridges follow: C5-C21, C9-C23, and C14-C28.

In terms of processing, this is a cyclic peptide. Post-translationally, contains 3 disulfide bonds.

Functionally, probably participates in a plant defense mechanism. The chain is Cyclotide mra3 from Melicytus ramiflorus (Whitey wood).